Consider the following 712-residue polypeptide: Matrix metalloproteinase-9 (712 aa).

The N-terminal stretch at 1–19 (MSPLQPLVLALLVLACCSA) is a signal peptide. Residues 20 to 106 (VPRRRQPTVV…PRCGVPDVGR (87 aa)) constitute a propeptide, activation peptide. Residue Asn-38 is glycosylated (N-linked (GlcNAc...) asparagine). The Cysteine switch signature appears at 97-104 (PRCGVPDV). Cys-99 is a binding site for Zn(2+). N-linked (GlcNAc...) asparagine glycans are attached at residues Asn-120 and Asn-127. Positions 131 and 165 each coordinate Ca(2+). Zn(2+) is bound by residues His-175 and Asp-177. 4 residues coordinate Ca(2+): Asp-182, Gly-183, Asn-185, and Leu-187. His-190 contacts Zn(2+). Gly-197, Gln-199, and Asp-201 together coordinate Ca(2+). Residue His-203 coordinates Zn(2+). Ca(2+) contacts are provided by Asp-205, Asp-206, and Glu-208. Fibronectin type-II domains are found at residues 225 to 273 (AKGA…FCPS), 283 to 331 (ADGK…FCPT), and 342 to 390 (AAGE…FCPD). Cystine bridges form between Cys-230-Cys-256, Cys-244-Cys-271, Cys-288-Cys-314, Cys-302-Cys-329, Cys-347-Cys-373, and Cys-361-Cys-388. His-401 serves as a coordination point for Zn(2+). The active site involves Glu-402. Positions 405 and 411 each coordinate Zn(2+). Positions 440–519 (QHLYGPRPEP…PTESPDPAED (80 aa)) are disordered. The segment covering 455 to 465 (TTTTTTTTEPQ) has biased composition (low complexity). The segment covering 491 to 504 (TGPPAAGPTGPPTA) has biased composition (pro residues). Low complexity predominate over residues 505–514 (GPSAAPTESP). Cys-521 and Cys-709 are joined by a disulfide. Hemopexin repeat units lie at residues 523–568 (VDIF…WPAL), 569–613 (PRKL…GLGP), 615–662 (VAQV…FPGV), and 663–709 (PIST…LLKC).

It belongs to the peptidase M10A family. In terms of assembly, exists as monomer or homodimer; disulfide-linked. Also exists as heterodimer with LCN2. Macrophages and transformed cell lines produce only the monomeric form. Interacts with ECM1. Zn(2+) is required as a cofactor. Requires Ca(2+) as cofactor. In terms of processing, N- and O-glycosylated.

It localises to the secreted. Its subcellular location is the extracellular space. The protein localises to the extracellular matrix. The enzyme catalyses Cleavage of gelatin types I and V and collagen types IV and V.. Matrix metalloproteinase that plays an essential role in local proteolysis of the extracellular matrix and in leukocyte migration. Could play a role in bone osteoclastic resorption. Cleaves KiSS1 at a Gly-|-Leu bond. Cleaves NINJ1 to generate the Secreted ninjurin-1 form. Cleaves type IV and type V collagen into large C-terminal three quarter fragments and shorter N-terminal one quarter fragments. Degrades fibronectin but not laminin or Pz-peptide. The chain is Matrix metalloproteinase-9 from Bos taurus (Bovine).